A 373-amino-acid polypeptide reads, in one-letter code: Ribonuclease D (373 aa).

The 169-residue stretch at 3–171 folds into the 3'-5' exonuclease domain; that stretch reads YQLITTDAGL…MAKRLVQETE (169 aa). The HRDC domain occupies 210-289; it reads RPRQLGCLQK…AEAAELEESA (80 aa).

It belongs to the RNase D family. It depends on a divalent metal cation as a cofactor.

It localises to the cytoplasm. It catalyses the reaction Exonucleolytic cleavage that removes extra residues from the 3'-terminus of tRNA to produce 5'-mononucleotides.. Functionally, exonuclease involved in the 3' processing of various precursor tRNAs. Initiates hydrolysis at the 3'-terminus of an RNA molecule and releases 5'-mononucleotides. The protein is Ribonuclease D of Serratia proteamaculans (strain 568).